A 187-amino-acid polypeptide reads, in one-letter code: Ribosome hibernation promotion factor (187 aa).

This sequence belongs to the HPF/YfiA ribosome-associated protein family. Long HPF subfamily. As to quaternary structure, interacts with 100S ribosomes.

It is found in the cytoplasm. In terms of biological role, involved in 100S ribosome formation from 70S ribosomes; 100S ribosomes are probably translationally inactive. Ribosome hibernation may be used by the cell to decrease overall energy consumption under nutrient-limiting conditions. Unlike E.coli, 100S ribosomes are present from mid-exponential growth, peak during the transition from log to stationary phase and then decrease. In Listeria monocytogenes serotype 1/2a (strain 10403S), this protein is Ribosome hibernation promotion factor.